A 273-amino-acid chain; its full sequence is Large ribosomal subunit protein uL2 (273 aa).

A disordered region spans residues 228–273; sequence VDHPHGGGEGKTSGGRHPVTPWGFSTKGKKTRKNKRTSKFIVKKRK. Residues 254 to 273 are compositionally biased toward basic residues; the sequence is KGKKTRKNKRTSKFIVKKRK.

This sequence belongs to the universal ribosomal protein uL2 family. As to quaternary structure, part of the 50S ribosomal subunit. Forms a bridge to the 30S subunit in the 70S ribosome.

Functionally, one of the primary rRNA binding proteins. Required for association of the 30S and 50S subunits to form the 70S ribosome, for tRNA binding and peptide bond formation. It has been suggested to have peptidyltransferase activity; this is somewhat controversial. Makes several contacts with the 16S rRNA in the 70S ribosome. In Rickettsia prowazekii (strain Madrid E), this protein is Large ribosomal subunit protein uL2.